We begin with the raw amino-acid sequence, 42 residues long: uncharacterized protein (42 aa).

The protein resides in the plastid. The protein localises to the chloroplast. This is an uncharacterized protein from Diacronema lutheri (Unicellular marine alga).